We begin with the raw amino-acid sequence, 221 residues long: GTP-binding nuclear protein Ran-2 (221 aa).

One can recognise a Small GTPase Ran-type domain in the interval 10 to 174 (DYPSFKLVIV…LYLARKLAGD (165 aa)). 21-28 (DGGTGKTT) lines the GTP pocket. Residues 40–48 (KKYEPTIGV) form a switch-I region. Residues G71, 125-128 (NKVD), and 153-155 (SAK) each bind GTP. Residues 71–87 (GQEKFGGLRDGYYIHGQ) form a switch-II region.

The protein belongs to the small GTPase superfamily. Ran family. As to quaternary structure, found in a nuclear export complex with RanGTP, exportin and pre-miRNA.

It localises to the nucleus. Its function is as follows. GTP-binding protein involved in nucleocytoplasmic transport. Required for the import of protein into the nucleus and also for RNA export. Involved in chromatin condensation and control of cell cycle. This Oryza sativa subsp. indica (Rice) protein is GTP-binding nuclear protein Ran-2 (RAN2).